Reading from the N-terminus, the 240-residue chain is Ribonuclease PH (240 aa).

Phosphate-binding positions include Arg86 and 124 to 126 (GTR).

Belongs to the RNase PH family. As to quaternary structure, homohexameric ring arranged as a trimer of dimers.

The catalysed reaction is tRNA(n+1) + phosphate = tRNA(n) + a ribonucleoside 5'-diphosphate. Phosphorolytic 3'-5' exoribonuclease that plays an important role in tRNA 3'-end maturation. Removes nucleotide residues following the 3'-CCA terminus of tRNAs; can also add nucleotides to the ends of RNA molecules by using nucleoside diphosphates as substrates, but this may not be physiologically important. Probably plays a role in initiation of 16S rRNA degradation (leading to ribosome degradation) during starvation. This Mannheimia succiniciproducens (strain KCTC 0769BP / MBEL55E) protein is Ribonuclease PH.